A 150-amino-acid chain; its full sequence is Lipoprotein signal peptidase (150 aa).

3 helical membrane-spanning segments follow: residues 5–25 (LSLVIIVVGIIADQVFKNWVV), 59–79 (QQWFFLVLTPIVLIVALWFLW), and 82–102 (MGQNWYFAGLTLIIAGALGNF). Catalysis depends on residues Asp-113 and Asp-129. The helical transmembrane segment at 124 to 144 (IFNIADILLSVGFVVLFIAIL) threads the bilayer.

This sequence belongs to the peptidase A8 family.

The protein resides in the cell membrane. The catalysed reaction is Release of signal peptides from bacterial membrane prolipoproteins. Hydrolyzes -Xaa-Yaa-Zaa-|-(S,diacylglyceryl)Cys-, in which Xaa is hydrophobic (preferably Leu), and Yaa (Ala or Ser) and Zaa (Gly or Ala) have small, neutral side chains.. The protein operates within protein modification; lipoprotein biosynthesis (signal peptide cleavage). This protein specifically catalyzes the removal of signal peptides from prolipoproteins. In Lactococcus lactis subsp. cremoris (strain SK11), this protein is Lipoprotein signal peptidase.